The primary structure comprises 473 residues: Allene oxide synthase CYP74A2 (473 aa).

Heme b is bound by residues K88, H119, and K123. S199 and K282 together coordinate (13S)-hydroperoxy-(9Z,11E)-octadecadienoate. Residues K424 and C426 each contribute to the heme b site.

The protein belongs to the cytochrome P450 family. Heme b is required as a cofactor.

It catalyses the reaction (13S)-hydroperoxy-(9Z,11E,15Z)-octadecatrienoate = (9Z,13S,15Z)-12,13-epoxyoctadeca-9,11,15-trienoate + H2O. The enzyme catalyses (13S)-hydroperoxy-(9Z,11E)-octadecadienoate = (9Z,13S)-12,13-epoxyoctadeca-9,11-dienoate + H2O. It participates in lipid metabolism; oxylipin biosynthesis. In terms of biological role, cytochrome P450 enzyme involved in the biosynthesis of oxylipin jasmonates, important phytohormones acting as growth regulators and signaling molecules for plant defense. Functions as an allene oxide synthase that converts hydroperoxy fatty acids to unstable allene epoxides. Catalyzes the dehydration of 13-HPOTE ((13S)-hydroperoxy-(9Z,11E,15Z)-octadecatrienoate). Also catalyzes the dehydration of 13-HPODE ((13S)-hydroperoxy-(9Z,11E)-octadecadienoate). The chain is Allene oxide synthase CYP74A2 from Parthenium argentatum (Guayule rubber plant).